The primary structure comprises 255 residues: Phosphoribosyl isomerase A (255 aa).

Catalysis depends on aspartate 21, which acts as the Proton acceptor. The active-site Proton donor is aspartate 140.

It belongs to the HisA/HisF family.

The protein localises to the cytoplasm. The enzyme catalyses 1-(5-phospho-beta-D-ribosyl)-5-[(5-phospho-beta-D-ribosylamino)methylideneamino]imidazole-4-carboxamide = 5-[(5-phospho-1-deoxy-D-ribulos-1-ylimino)methylamino]-1-(5-phospho-beta-D-ribosyl)imidazole-4-carboxamide. The catalysed reaction is N-(5-phospho-beta-D-ribosyl)anthranilate = 1-(2-carboxyphenylamino)-1-deoxy-D-ribulose 5-phosphate. It participates in amino-acid biosynthesis; L-histidine biosynthesis; L-histidine from 5-phospho-alpha-D-ribose 1-diphosphate: step 4/9. It functions in the pathway amino-acid biosynthesis; L-tryptophan biosynthesis; L-tryptophan from chorismate: step 3/5. Its function is as follows. Involved in both the histidine and tryptophan biosynthetic pathways. The protein is Phosphoribosyl isomerase A of Mycolicibacterium vanbaalenii (strain DSM 7251 / JCM 13017 / BCRC 16820 / KCTC 9966 / NRRL B-24157 / PYR-1) (Mycobacterium vanbaalenii).